The sequence spans 483 residues: Essential nuclear protein 1 (483 aa).

4 disordered regions span residues 1–21 (MARASSTKARKQRHDPLLKDL), 33–55 (KKKLAQNDAANHDAANEEDGYID), 67–123 (KEQQ…EGDY), and 171–200 (ESQVEDMQDDEPLANEQNTSRGNISSGLKS). The span at 96–123 (YDDEDEDEDEDEEAFGEDISDFEPEGDY) shows a compositional bias: acidic residues. A Phosphoserine; by ATM or ATR modification is found at serine 172. Residues 174 to 183 (VEDMQDDEPL) are compositionally biased toward acidic residues. Residues 185–198 (NEQNTSRGNISSGL) are compositionally biased toward polar residues. A phosphoserine mark is found at serine 190 and serine 404.

Belongs to the bystin family.

It localises to the cytoplasm. It is found in the nucleus. The protein resides in the nucleolus. Its function is as follows. Required for normal export of the pre-40S particles from the nucleus to the cytoplasm. Its subcellular location and association with pre-40S subunit shifts from mixed cytoplasm/nucleus to all nuclear in RPS19 disruptions, suggesting it acts after the ribosomal protein. The chain is Essential nuclear protein 1 (ENP1) from Saccharomyces cerevisiae (strain ATCC 204508 / S288c) (Baker's yeast).